Reading from the N-terminus, the 337-residue chain is tRNA N6-adenosine threonylcarbamoyltransferase (337 aa).

2 residues coordinate Fe cation: histidine 111 and histidine 115. Substrate contacts are provided by residues 134–138 (LVSGG), aspartate 167, glycine 180, and asparagine 272. Fe cation is bound at residue aspartate 300.

The protein belongs to the KAE1 / TsaD family. It depends on Fe(2+) as a cofactor.

It is found in the cytoplasm. The catalysed reaction is L-threonylcarbamoyladenylate + adenosine(37) in tRNA = N(6)-L-threonylcarbamoyladenosine(37) in tRNA + AMP + H(+). Its function is as follows. Required for the formation of a threonylcarbamoyl group on adenosine at position 37 (t(6)A37) in tRNAs that read codons beginning with adenine. Is involved in the transfer of the threonylcarbamoyl moiety of threonylcarbamoyl-AMP (TC-AMP) to the N6 group of A37, together with TsaE and TsaB. TsaD likely plays a direct catalytic role in this reaction. The sequence is that of tRNA N6-adenosine threonylcarbamoyltransferase from Salmonella arizonae (strain ATCC BAA-731 / CDC346-86 / RSK2980).